The chain runs to 322 residues: tRNA U34 carboxymethyltransferase (322 aa).

Carboxy-S-adenosyl-L-methionine-binding positions include Lys91, Trp105, Lys110, Gly129, 179 to 180 (LE), Met195, Tyr199, and Arg314.

It belongs to the class I-like SAM-binding methyltransferase superfamily. CmoB family. Homotetramer.

The catalysed reaction is carboxy-S-adenosyl-L-methionine + 5-hydroxyuridine(34) in tRNA = 5-carboxymethoxyuridine(34) in tRNA + S-adenosyl-L-homocysteine + H(+). Functionally, catalyzes carboxymethyl transfer from carboxy-S-adenosyl-L-methionine (Cx-SAM) to 5-hydroxyuridine (ho5U) to form 5-carboxymethoxyuridine (cmo5U) at position 34 in tRNAs. This chain is tRNA U34 carboxymethyltransferase, found in Pseudomonas paraeruginosa (strain DSM 24068 / PA7) (Pseudomonas aeruginosa (strain PA7)).